Reading from the N-terminus, the 365-residue chain is Eukaryotic translation initiation factor 3 subunit H (365 aa).

The MPN domain maps to 11 to 160 (VQVEALVVMK…LRAFRLSPQF (150 aa)). The stretch at 273 to 303 (YQRSLAREQTKIAAWQAKRKAENATRAQLKQ) forms a coiled coil.

It belongs to the eIF-3 subunit H family. In terms of assembly, component of the eukaryotic translation initiation factor 3 (eIF-3) complex.

It is found in the cytoplasm. Its function is as follows. Component of the eukaryotic translation initiation factor 3 (eIF-3) complex, which is involved in protein synthesis of a specialized repertoire of mRNAs and, together with other initiation factors, stimulates binding of mRNA and methionyl-tRNAi to the 40S ribosome. The eIF-3 complex specifically targets and initiates translation of a subset of mRNAs involved in cell proliferation. This Coccidioides immitis (strain RS) (Valley fever fungus) protein is Eukaryotic translation initiation factor 3 subunit H.